Here is a 56-residue protein sequence, read N- to C-terminus: Potassium channel toxin alpha-KTx 9.8 (56 aa).

An N-terminal signal peptide occupies residues 1–19 (MSRLFTLVLIVLAMNVMMA). A propeptide spanning residues 20–28 (IISDPVVEA) is cleaved from the precursor. Cystine bridges form between C31/C47, C34/C52, and C38/C54.

The protein belongs to the short scorpion toxin superfamily. Potassium channel inhibitor family. Alpha-KTx 09 subfamily. Expressed by the venom gland.

Its subcellular location is the secreted. Its function is as follows. Potassium channel inhibitor. The sequence is that of Potassium channel toxin alpha-KTx 9.8 from Buthus israelis (Israeli scorpion).